Consider the following 201-residue polypeptide: MSAKLERLSQTLRDVLGDVVESLVVDRGEVTIEVAAGNFLDVARRLRDEAALGFEQLMDISGIDYSAFGNGAWQGKRFASVAHLLSVKNNWRLRLRVFADDDDFPVLGSLVEVWPSANWFEREAFDLYGILYAGHPDLRRILTDYGFVGHPFRKDFPISGYVEMRYDPEQGRVVYQPVTIEPRENTPRIVREENYGDVGHG.

Belongs to the complex I 30 kDa subunit family. In terms of assembly, NDH-1 is composed of 14 different subunits. Subunits NuoB, C, D, E, F, and G constitute the peripheral sector of the complex.

Its subcellular location is the cell inner membrane. It carries out the reaction a quinone + NADH + 5 H(+)(in) = a quinol + NAD(+) + 4 H(+)(out). In terms of biological role, NDH-1 shuttles electrons from NADH, via FMN and iron-sulfur (Fe-S) centers, to quinones in the respiratory chain. The immediate electron acceptor for the enzyme in this species is believed to be ubiquinone. Couples the redox reaction to proton translocation (for every two electrons transferred, four hydrogen ions are translocated across the cytoplasmic membrane), and thus conserves the redox energy in a proton gradient. In Azoarcus sp. (strain BH72), this protein is NADH-quinone oxidoreductase subunit C.